A 629-amino-acid polypeptide reads, in one-letter code: Methionine--tRNA ligase (629 aa).

Residues 10–20 (YYVNSEPHIGS) carry the 'HIGH' region motif. Zn(2+) is bound by residues Cys125, Cys128, Cys146, and Cys149. A 'KMSKS' region motif is present at residues 297–301 (KISKS). Residue Lys300 coordinates ATP. In terms of domain architecture, tRNA-binding spans 529–629 (DFSKVDLRIA…GEITPGAKVS (101 aa)).

This sequence belongs to the class-I aminoacyl-tRNA synthetase family. MetG type 2A subfamily. Homodimer. It depends on Zn(2+) as a cofactor.

It is found in the cytoplasm. The enzyme catalyses tRNA(Met) + L-methionine + ATP = L-methionyl-tRNA(Met) + AMP + diphosphate. In terms of biological role, is required not only for elongation of protein synthesis but also for the initiation of all mRNA translation through initiator tRNA(fMet) aminoacylation. In Thermotoga maritima (strain ATCC 43589 / DSM 3109 / JCM 10099 / NBRC 100826 / MSB8), this protein is Methionine--tRNA ligase (metG).